The following is a 230-amino-acid chain: 7-cyano-7-deazaguanine synthase (230 aa).

ATP is bound at residue 7–17 (CSGGLDSVSLA). 4 residues coordinate Zn(2+): Cys185, Cys193, Cys196, and Cys199.

Belongs to the QueC family. It depends on Zn(2+) as a cofactor.

It carries out the reaction 7-carboxy-7-deazaguanine + NH4(+) + ATP = 7-cyano-7-deazaguanine + ADP + phosphate + H2O + H(+). Its pathway is purine metabolism; 7-cyano-7-deazaguanine biosynthesis. Catalyzes the ATP-dependent conversion of 7-carboxy-7-deazaguanine (CDG) to 7-cyano-7-deazaguanine (preQ(0)). The sequence is that of 7-cyano-7-deazaguanine synthase from Ruegeria pomeroyi (strain ATCC 700808 / DSM 15171 / DSS-3) (Silicibacter pomeroyi).